We begin with the raw amino-acid sequence, 125 residues long: Cyclin-dependent protein kinase inhibitor SMR16 (125 aa).

In terms of biological role, probable cyclin-dependent protein kinase (CDK) inhibitor that functions as a repressor of mitosis in the endoreduplication cell cycle. The sequence is that of Cyclin-dependent protein kinase inhibitor SMR16 from Arabidopsis thaliana (Mouse-ear cress).